The sequence spans 494 residues: Glutamate--tRNA ligase (494 aa).

The 'HIGH' region signature appears at 9–19 (PSPTGDPHLGT). The 'KMSKS' region signature appears at 250–254 (KLSKR). Lys-253 lines the ATP pocket.

This sequence belongs to the class-I aminoacyl-tRNA synthetase family. Glutamate--tRNA ligase type 1 subfamily. Monomer.

Its subcellular location is the cytoplasm. It carries out the reaction tRNA(Glu) + L-glutamate + ATP = L-glutamyl-tRNA(Glu) + AMP + diphosphate. Its function is as follows. Catalyzes the attachment of glutamate to tRNA(Glu) in a two-step reaction: glutamate is first activated by ATP to form Glu-AMP and then transferred to the acceptor end of tRNA(Glu). The protein is Glutamate--tRNA ligase of Pseudoalteromonas translucida (strain TAC 125).